Here is a 110-residue protein sequence, read N- to C-terminus: MQPGGQFDMQQLLAQAQQMQEAVMQAQAEIAATEVEGQAGGGLVKATIKATGEVQALTIDPKVVDPEDVEGLQDLVIGAINDAMARAQQLAAERLGPLAGGGSMPGLPGF.

The protein belongs to the YbaB/EbfC family. In terms of assembly, homodimer.

The protein resides in the cytoplasm. It is found in the nucleoid. Its function is as follows. Binds to DNA and alters its conformation. May be involved in regulation of gene expression, nucleoid organization and DNA protection. The sequence is that of Nucleoid-associated protein NFA_2940 from Nocardia farcinica (strain IFM 10152).